The following is a 229-amino-acid chain: Transmembrane protein 217 (229 aa).

Residues 13–33 (MGTVLSGVFTIMAVDMYLIFE) traverse the membrane as a helical segment. A glycan (N-linked (GlcNAc...) asparagine) is linked at asparagine 39. Helical transmembrane passes span 67–87 (IVLF…YSVY), 94–114 (LVIY…IQIL), and 129–149 (WFGL…VINY). Asparagine 156 is a glycosylation site (N-linked (GlcNAc...) asparagine).

The protein localises to the membrane. The chain is Transmembrane protein 217 (TMEM217) from Homo sapiens (Human).